The sequence spans 262 residues: Octopine permease ATP-binding protein P (262 aa).

In terms of domain architecture, ABC transporter spans 9–254 (VQLKDIRKNF…PRTDRFRQFL (246 aa)). 41-48 (GSSGSGKS) serves as a coordination point for ATP.

This sequence belongs to the ABC transporter superfamily.

It is found in the cell inner membrane. Component of the octopine active transport system probably consisting of four subunits: Q, M, P and T. This is Octopine permease ATP-binding protein P (occP) from Rhizobium radiobacter (Agrobacterium tumefaciens).